We begin with the raw amino-acid sequence, 269 residues long: Putative pyruvate, phosphate dikinase regulatory protein (269 aa).

Residue 151 to 158 (GISRTSKT) participates in ADP binding.

It belongs to the pyruvate, phosphate/water dikinase regulatory protein family. PDRP subfamily.

The catalysed reaction is N(tele)-phospho-L-histidyl/L-threonyl-[pyruvate, phosphate dikinase] + ADP = N(tele)-phospho-L-histidyl/O-phospho-L-threonyl-[pyruvate, phosphate dikinase] + AMP + H(+). It carries out the reaction N(tele)-phospho-L-histidyl/O-phospho-L-threonyl-[pyruvate, phosphate dikinase] + phosphate + H(+) = N(tele)-phospho-L-histidyl/L-threonyl-[pyruvate, phosphate dikinase] + diphosphate. Functionally, bifunctional serine/threonine kinase and phosphorylase involved in the regulation of the pyruvate, phosphate dikinase (PPDK) by catalyzing its phosphorylation/dephosphorylation. This chain is Putative pyruvate, phosphate dikinase regulatory protein, found in Staphylococcus aureus.